We begin with the raw amino-acid sequence, 176 residues long: dCTP deaminase (176 aa).

DCTP is bound by residues 102 to 107 (RSTFAR) and Asp118. Glu128 functions as the Proton donor/acceptor in the catalytic mechanism. The dCTP site is built by Tyr160, Lys166, and Gln167.

It belongs to the dCTP deaminase family. Homotrimer.

The catalysed reaction is dCTP + H2O + H(+) = dUTP + NH4(+). Its pathway is pyrimidine metabolism; dUMP biosynthesis; dUMP from dCTP (dUTP route): step 1/2. Its function is as follows. Catalyzes the deamination of dCTP to dUTP. This is dCTP deaminase from Staphylothermus marinus (strain ATCC 43588 / DSM 3639 / JCM 9404 / F1).